The sequence spans 269 residues: tRNA pseudouridine synthase A (269 aa).

Asp52 functions as the Nucleophile in the catalytic mechanism. Tyr110 contributes to the substrate binding site.

It belongs to the tRNA pseudouridine synthase TruA family. Homodimer.

It catalyses the reaction uridine(38/39/40) in tRNA = pseudouridine(38/39/40) in tRNA. Formation of pseudouridine at positions 38, 39 and 40 in the anticodon stem and loop of transfer RNAs. This Bacteroides thetaiotaomicron (strain ATCC 29148 / DSM 2079 / JCM 5827 / CCUG 10774 / NCTC 10582 / VPI-5482 / E50) protein is tRNA pseudouridine synthase A.